The primary structure comprises 137 residues: Large ribosomal subunit protein uL16 (137 aa).

Residues 1–17 are compositionally biased toward basic residues; it reads MLQPKRTKFRKQQKGRN. The tract at residues 1 to 21 is disordered; that stretch reads MLQPKRTKFRKQQKGRNRGQA.

It belongs to the universal ribosomal protein uL16 family. Part of the 50S ribosomal subunit.

Binds 23S rRNA and is also seen to make contacts with the A and possibly P site tRNAs. In Nitrosococcus oceani (strain ATCC 19707 / BCRC 17464 / JCM 30415 / NCIMB 11848 / C-107), this protein is Large ribosomal subunit protein uL16.